The primary structure comprises 156 residues: Small ribosomal subunit protein uS7 (156 aa).

Belongs to the universal ribosomal protein uS7 family. As to quaternary structure, part of the 30S ribosomal subunit. Contacts proteins S9 and S11.

In terms of biological role, one of the primary rRNA binding proteins, it binds directly to 16S rRNA where it nucleates assembly of the head domain of the 30S subunit. Is located at the subunit interface close to the decoding center, probably blocks exit of the E-site tRNA. This Shewanella sp. (strain MR-7) protein is Small ribosomal subunit protein uS7.